A 156-amino-acid polypeptide reads, in one-letter code: Crossover junction endodeoxyribonuclease RuvC (156 aa).

Active-site residues include aspartate 7, glutamate 67, and aspartate 140. Positions 7, 67, and 140 each coordinate Mg(2+).

The protein belongs to the RuvC family. As to quaternary structure, homodimer which binds Holliday junction (HJ) DNA. The HJ becomes 2-fold symmetrical on binding to RuvC with unstacked arms; it has a different conformation from HJ DNA in complex with RuvA. In the full resolvosome a probable DNA-RuvA(4)-RuvB(12)-RuvC(2) complex forms which resolves the HJ. It depends on Mg(2+) as a cofactor.

The protein localises to the cytoplasm. It catalyses the reaction Endonucleolytic cleavage at a junction such as a reciprocal single-stranded crossover between two homologous DNA duplexes (Holliday junction).. Its function is as follows. The RuvA-RuvB-RuvC complex processes Holliday junction (HJ) DNA during genetic recombination and DNA repair. Endonuclease that resolves HJ intermediates. Cleaves cruciform DNA by making single-stranded nicks across the HJ at symmetrical positions within the homologous arms, yielding a 5'-phosphate and a 3'-hydroxyl group; requires a central core of homology in the junction. The consensus cleavage sequence is 5'-(A/T)TT(C/G)-3'. Cleavage occurs on the 3'-side of the TT dinucleotide at the point of strand exchange. HJ branch migration catalyzed by RuvA-RuvB allows RuvC to scan DNA until it finds its consensus sequence, where it cleaves and resolves the cruciform DNA. The chain is Crossover junction endodeoxyribonuclease RuvC from Rickettsia felis (strain ATCC VR-1525 / URRWXCal2) (Rickettsia azadi).